The chain runs to 467 residues: Glutamate--tRNA ligase (467 aa).

Residues 9 to 19 carry the 'HIGH' region motif; it reads PSPTGYLHIGG. The 'KMSKS' region signature appears at 237–241; the sequence is KLSKR. Residue lysine 240 participates in ATP binding.

This sequence belongs to the class-I aminoacyl-tRNA synthetase family. Glutamate--tRNA ligase type 1 subfamily. As to quaternary structure, monomer.

It is found in the cytoplasm. It carries out the reaction tRNA(Glu) + L-glutamate + ATP = L-glutamyl-tRNA(Glu) + AMP + diphosphate. In terms of biological role, catalyzes the attachment of glutamate to tRNA(Glu) in a two-step reaction: glutamate is first activated by ATP to form Glu-AMP and then transferred to the acceptor end of tRNA(Glu). This Xylella fastidiosa (strain 9a5c) protein is Glutamate--tRNA ligase.